An 804-amino-acid polypeptide reads, in one-letter code: Endoplasmin (804 aa).

The N-terminal stretch at 1–21 (MRALWVLGLCCVLLTFGSVRA) is a signal peptide. The SRT pseudosubstrate motif signature appears at 42-44 (SRT). Asparagine 62 carries an N-linked (GlcNAc...) asparagine glycan. Serine 64 is subject to Phosphoserine. Residue asparagine 107 is glycosylated (N-linked (GlcNAc...) asparagine). Residues asparagine 107, aspartate 149, and asparagine 162 each coordinate ATP. The residue at position 168 (lysine 168) is an N6-(2-hydroxyisobutyryl)lysine. Phosphoserine is present on serine 172. Phenylalanine 199 serves as a coordination point for ATP. Asparagine 217 carries an N-linked (GlcNAc...) asparagine glycan. Residues 288-323 (TVEEPMEEEEAAKEEKEESDDEAAVEEEEEEKKPKT) form a disordered region. Acidic residues predominate over residues 289-317 (VEEPMEEEEAAKEEKEESDDEAAVEEEEE). Phosphoserine is present on residues serine 306 and serine 403. Lysine 404 is modified (N6-succinyllysine). Asparagine 445 is a glycosylation site (N-linked (GlcNAc...) asparagine). At serine 447 the chain carries Phosphoserine. Lysine 479 carries the N6-acetyllysine modification. N-linked (GlcNAc...) asparagine glycans are attached at residues asparagine 481 and asparagine 502. Position 633 is an N6-succinyllysine (lysine 633). A disordered region spans residues 750–804 (DPDAKVEDEPEEEPEETTEDTTEDTEQDEDEEMDVGTDEEEQETAKESTAEKDEL). Residues 757-791 (DEPEEEPEETTEDTTEDTEQDEDEEMDVGTDEEEQ) are compositionally biased toward acidic residues. At threonine 786 the chain carries Phosphothreonine. Residues 792–804 (ETAKESTAEKDEL) show a composition bias toward basic and acidic residues. The Prevents secretion from ER motif lies at 801–804 (KDEL).

It belongs to the heat shock protein 90 family. Homodimer; disulfide-linked. Component of an EIF2 complex at least composed of CELF1/CUGBP1, CALR, CALR3, EIF2S1, EIF2S2, HSP90B1 and HSPA5. Part of a large chaperone multiprotein complex comprising DNAJB11, HSP90B1, HSPA5, HYOU, PDIA2, PDIA4, PDIA6, PPIB, SDF2L1, UGGT1 and very small amounts of ERP29, but not, or at very low levels, CALR nor CANX. Interacts with AIMP1; regulates its retention in the endoplasmic reticulum. Hyperglycosylated form interacts with OS9; promoting its degradation by the endoplasmic reticulum associated degradation (ERAD). Interacts with CNPY3. This interaction is disrupted in the presence of ATP. Interacts with TLR4 and TLR9, but not with TLR3. Interacts with MZB1 in a calcium-dependent manner. Interacts with METTL23. Interacts with IL1B; the interaction facilitates cargo translocation into the ERGIC. Interacts with EIF2AK3. Post-translationally, phosphorylated by CK2. N-glycosylated cotranslationally at Asn-217 by STT3A-containing OST-A complex: this glycosylation is constitutive. In response to various stress, 5 additional facultative sites (Asn-62, Asn-107, Asn-445, Asn-481 and Asn-502) can be glycosylated post-translationally by STT3B-containing OST-B complex, leading to a hyperglycosylated form that is degraded by the ER-associated degradation (ERAD) pathway. In normal conditions, the OST-A complex together with CCDC134 prevent glycosylation at facultative sites during protein folding, thereby preventing hyperglycosylation. Mechanistically, nascent HSP90B1 is tethered during translation to a specialized CCDC134-containing translocon that forms a microenvironment for its folding, in which STT3A associates with the SRT pseudosubstrate motif, and prevents access to facultative glycosylation sites until folding is completed, rendering its facultative sites inaccessible to the OST-B complex.

Its subcellular location is the endoplasmic reticulum lumen. It localises to the sarcoplasmic reticulum lumen. It is found in the melanosome. It carries out the reaction ATP + H2O = ADP + phosphate + H(+). Its function is as follows. ATP-dependent chaperone involved in the processing of proteins in the endoplasmic reticulum, regulating their transport. Together with MESD, acts as a modulator of the Wnt pathway by promoting the folding of LRP6, a coreceptor of the canonical Wnt pathway. When associated with CNPY3, required for proper folding of Toll-like receptors. Promotes folding and trafficking of TLR4 to the cell surface. May participate in the unfolding of cytosolic leaderless cargos (lacking the secretion signal sequence) such as the interleukin 1/IL-1 to facilitate their translocation into the ERGIC (endoplasmic reticulum-Golgi intermediate compartment) and secretion; the translocation process is mediated by the cargo receptor TMED10. This Macaca fascicularis (Crab-eating macaque) protein is Endoplasmin (HSP90B1).